Here is a 437-residue protein sequence, read N- to C-terminus: MQVSLETTSGLERRLTVGVPAEQVENEVENRLKQAARNVTIKGFRKGKVPLSVVKQRFGAGIRQEVVGDVINRSFYAAVQKENLKPAGQPSIQPKQLSAGQDLEYIAVFEVYPSVELSDLSVFEITRHKAEVTDVDVDNMIDVLRKHQATWTQVERAAADGDQVNINFVGTKDGVEFAGGKADNQNLILGSNSMIPGFEAGLVGLKSGDQKTLALTFPEDYHSEELKGAAVEFAVTVNSVSEAVLPELNKEFFQKFGVEKGGEKQFRKEVKANMERELGNALKAKVKGQVMDALVASHTVDVPKALVANEIQVLRNQMLQRFGGQQQNFDVKSLLPDTMFQEEASRRVTLGLIVGEIVKSAKLKPDAKRIKSMIEEIASTYQEPQEVIDYYNSNQELLAGVESAVLEDQVVDHILSKAKVSDVDSTYDDVIKSKAQR.

One can recognise a PPIase FKBP-type domain in the interval 161–246 (GDQVNINFVG…VNSVSEAVLP (86 aa)).

Belongs to the FKBP-type PPIase family. Tig subfamily.

The protein localises to the cytoplasm. The catalysed reaction is [protein]-peptidylproline (omega=180) = [protein]-peptidylproline (omega=0). Functionally, involved in protein export. Acts as a chaperone by maintaining the newly synthesized protein in an open conformation. Functions as a peptidyl-prolyl cis-trans isomerase. The protein is Trigger factor of Cellvibrio japonicus (strain Ueda107) (Pseudomonas fluorescens subsp. cellulosa).